The chain runs to 296 residues: Fructose-bisphosphate aldolase class 1 (296 aa).

Glu-175 acts as the Proton acceptor in catalysis. The active-site Schiff-base intermediate with dihydroxyacetone-P is the Lys-212.

It belongs to the class I fructose-bisphosphate aldolase family.

It catalyses the reaction beta-D-fructose 1,6-bisphosphate = D-glyceraldehyde 3-phosphate + dihydroxyacetone phosphate. It functions in the pathway carbohydrate degradation; glycolysis; D-glyceraldehyde 3-phosphate and glycerone phosphate from D-glucose: step 4/4. The sequence is that of Fructose-bisphosphate aldolase class 1 from Staphylococcus epidermidis (strain ATCC 35984 / DSM 28319 / BCRC 17069 / CCUG 31568 / BM 3577 / RP62A).